The chain runs to 245 residues: uncharacterized protein (245 aa).

The next 2 helical transmembrane spans lie at Leu29 to Met51 and Thr61 to His83.

The protein resides in the cell membrane. This is an uncharacterized protein from Treponema pallidum (strain Nichols).